Consider the following 156-residue polypeptide: Transcription antitermination protein NusB (156 aa).

This sequence belongs to the NusB family.

In terms of biological role, involved in transcription antitermination. Required for transcription of ribosomal RNA (rRNA) genes. Binds specifically to the boxA antiterminator sequence of the ribosomal RNA (rrn) operons. This is Transcription antitermination protein NusB from Mycobacterium bovis (strain ATCC BAA-935 / AF2122/97).